The following is a 260-amino-acid chain: Opacity protein opA58 (260 aa).

An N-terminal signal peptide occupies residues methionine 1–alanine 23.

It belongs to the opacity porin family.

The protein resides in the cell outer membrane. In terms of biological role, implicated in a number of adherence functions. OPA proteins are implicated in pathogenesis and are subject to phase variation. In Neisseria gonorrhoeae, this protein is Opacity protein opA58 (opaJ).